A 111-amino-acid chain; its full sequence is Distal membrane-arm assembly complex protein 1 (111 aa).

Residues 1-11 (MGSSFSGSTEF) show a composition bias toward polar residues. A disordered region spans residues 1 to 40 (MGSSFSGSTEFSAPAPPTVSTAVPANPPAKSAVPASPARD). The span at 18–38 (TVSTAVPANPPAKSAVPASPA) shows a compositional bias: low complexity. The next 2 helical transmembrane spans lie at 51–68 (VLSG…YLVA) and 81–101 (GTVL…VVLV).

As to quaternary structure, interacts with incompletely assembled mitochondrial NADH:ubiquinone oxidoreductase complex (complex I).

The protein resides in the mitochondrion inner membrane. Required for the assembly of the mitochondrial NADH:ubiquinone oxidoreductase complex (complex I). Involved in the assembly of the distal region of complex I. The protein is Distal membrane-arm assembly complex protein 1 of Mus musculus (Mouse).